We begin with the raw amino-acid sequence, 466 residues long: 23S rRNA (uracil(1939)-C(5))-methyltransferase RlmD (466 aa).

Residues 1 to 54 (MVDVLNIESLDLEARGIAHRDGKVLFVEGALPGERVTVQTVRRKPSYEIAKVEE) enclose the TRAM domain. 4 residues coordinate [4Fe-4S] cluster: Cys-67, Cys-73, Cys-76, and Cys-155. S-adenosyl-L-methionine contacts are provided by Gln-264, Phe-293, Asn-298, Glu-314, Asn-342, and Asp-363. Residue Cys-393 is the Nucleophile of the active site.

It belongs to the class I-like SAM-binding methyltransferase superfamily. RNA M5U methyltransferase family. RlmD subfamily.

It carries out the reaction uridine(1939) in 23S rRNA + S-adenosyl-L-methionine = 5-methyluridine(1939) in 23S rRNA + S-adenosyl-L-homocysteine + H(+). Functionally, catalyzes the formation of 5-methyl-uridine at position 1939 (m5U1939) in 23S rRNA. This chain is 23S rRNA (uracil(1939)-C(5))-methyltransferase RlmD, found in Bordetella bronchiseptica (strain ATCC BAA-588 / NCTC 13252 / RB50) (Alcaligenes bronchisepticus).